A 179-amino-acid polypeptide reads, in one-letter code: Ribosome maturation factor RimP (179 aa).

The protein belongs to the RimP family.

It is found in the cytoplasm. In terms of biological role, required for maturation of 30S ribosomal subunits. The polypeptide is Ribosome maturation factor RimP (Chlorobium chlorochromatii (strain CaD3)).